The primary structure comprises 146 residues: Large ribosomal subunit protein uL15 (146 aa).

Residues 1 to 56 (MKLHELRAAEGANKASKRVGRGTGSGLGKTSGKGQNGQNSRSGGGVRPGFEGGQMP) are disordered. Gly residues-rich tracts occupy residues 21 to 35 (RGTG…GKGQ) and 42 to 52 (SGGGVRPGFEG).

It belongs to the universal ribosomal protein uL15 family. In terms of assembly, part of the 50S ribosomal subunit.

Its function is as follows. Binds to the 23S rRNA. This chain is Large ribosomal subunit protein uL15, found in Clostridium botulinum (strain Loch Maree / Type A3).